The chain runs to 162 residues: NADH-quinone oxidoreductase subunit I (162 aa).

2 consecutive 4Fe-4S ferredoxin-type domains span residues Arg54–Thr83 and Ser93–Ile122. Positions 63, 66, 69, 73, 102, 105, 108, and 112 each coordinate [4Fe-4S] cluster.

It belongs to the complex I 23 kDa subunit family. NDH-1 is composed of 14 different subunits. Subunits NuoA, H, J, K, L, M, N constitute the membrane sector of the complex. Requires [4Fe-4S] cluster as cofactor.

The protein resides in the cell inner membrane. The catalysed reaction is a quinone + NADH + 5 H(+)(in) = a quinol + NAD(+) + 4 H(+)(out). Functionally, NDH-1 shuttles electrons from NADH, via FMN and iron-sulfur (Fe-S) centers, to quinones in the respiratory chain. The immediate electron acceptor for the enzyme in this species is believed to be ubiquinone. Couples the redox reaction to proton translocation (for every two electrons transferred, four hydrogen ions are translocated across the cytoplasmic membrane), and thus conserves the redox energy in a proton gradient. In Francisella tularensis subsp. tularensis (strain FSC 198), this protein is NADH-quinone oxidoreductase subunit I.